A 123-amino-acid chain; its full sequence is Large ribosomal subunit protein uL14c (123 aa).

The protein belongs to the universal ribosomal protein uL14 family. As to quaternary structure, part of the 50S ribosomal subunit.

Its subcellular location is the plastid. It is found in the chloroplast. Binds to 23S rRNA. This Triticum aestivum (Wheat) protein is Large ribosomal subunit protein uL14c.